The following is a 635-amino-acid chain: Threonine--tRNA ligase (635 aa).

One can recognise a TGS domain in the interval 1 to 58 (MIHVTCNQEAFELPEGASAMDLANKMKQSHCFVGALINDQEKDLSTTLQDGDTVLFLT). The catalytic stretch occupies residues 237–528 (DHRVLGTKLD…LIEHFKGRFP (292 aa)). The Zn(2+) site is built by cysteine 328, histidine 379, and histidine 505.

This sequence belongs to the class-II aminoacyl-tRNA synthetase family. As to quaternary structure, homodimer. Requires Zn(2+) as cofactor.

Its subcellular location is the cytoplasm. It catalyses the reaction tRNA(Thr) + L-threonine + ATP = L-threonyl-tRNA(Thr) + AMP + diphosphate + H(+). Functionally, catalyzes the attachment of threonine to tRNA(Thr) in a two-step reaction: L-threonine is first activated by ATP to form Thr-AMP and then transferred to the acceptor end of tRNA(Thr). Also edits incorrectly charged L-seryl-tRNA(Thr). This chain is Threonine--tRNA ligase, found in Chlamydia trachomatis serovar L2b (strain UCH-1/proctitis).